A 985-amino-acid chain; its full sequence is Alanine--tRNA ligase, mitochondrial (985 aa).

A mitochondrion-targeting transit peptide spans Met-1 to Arg-23. ATP is bound by residues Arg-110, His-128, Trp-210, and Leu-240–Asn-242. Positions 242 and 265 each coordinate L-alanine. ATP is bound at residue Gly-269. Positions 632, 636, 749, and 753 each coordinate Zn(2+).

The protein belongs to the class-II aminoacyl-tRNA synthetase family. In terms of assembly, monomer. Zn(2+) serves as cofactor.

Its subcellular location is the mitochondrion. It carries out the reaction tRNA(Ala) + L-alanine + ATP = L-alanyl-tRNA(Ala) + AMP + diphosphate. The enzyme catalyses (S)-lactate + ATP + H(+) = (S)-lactoyl-AMP + diphosphate. It catalyses the reaction (S)-lactoyl-AMP + L-lysyl-[protein] = N(6)-[(S)-lactoyl]-L-lysyl-[protein] + AMP + 2 H(+). Catalyzes the attachment of alanine to tRNA(Ala) in a two-step reaction: alanine is first activated by ATP to form Ala-AMP and then transferred to the acceptor end of tRNA(Ala). Also edits incorrectly charged tRNA(Ala) via its editing domain. In presence of high levels of lactate, also acts as a protein lactyltransferase that mediates lactylation of lysine residues in target proteins, such as CGAS. Acts as an inhibitor of cGAS/STING signaling by catalyzing lactylation of CGAS, preventing the formation of liquid-like droplets in which CGAS is activated. This Homo sapiens (Human) protein is Alanine--tRNA ligase, mitochondrial.